A 1315-amino-acid polypeptide reads, in one-letter code: Myopalladin (1315 aa).

4 disordered regions span residues 19-60 (SYLA…DLPD), 81-145 (INHD…TQSK), 166-204 (HSSK…TERR), and 230-266 (EAKR…LGQP). 2 stretches are compositionally biased toward basic and acidic residues: residues 23–35 (ETRH…RSRA) and 84–104 (DPLE…DQTK). 2 positions are modified to phosphoserine: S99 and S129. Positions 166-180 (HSSKRIRPRACKNHK) are enriched in basic residues. Positions 184–199 (ESQNKVLQENSPTFSD) are enriched in polar residues. Residues 219–240 (DNELNHAIEQREAKRREAELAA) are a coiled coil. T249 is subject to Phosphothreonine. The region spanning 267–357 (PRFTQKLRSR…DSTSAEIYIE (91 aa)) is the Ig-like 1 domain. C288 and C339 are oxidised to a cystine. Positions 359-392 (VSSSDSEGDPNKEEMNRIQKPNEVSSPPTTSAAI) are disordered. The region spanning 432–528 (PVFTKMLQNL…GTVSSIAQLD (97 aa)) is the Ig-like 2 domain. C453 and C512 form a disulfide bridge. Disordered stretches follow at residues 535–652 (ISDN…VLAK), 674–704 (LQNT…SSKQ), and 725–747 (SSTS…NTPQ). Residues 609–623 (SSGSGAANTSQTRPN) show a composition bias toward polar residues. The residue at position 641 (S641) is a Phosphoserine. A compositionally biased stretch (low complexity) spans 725-741 (SSTSTATVSPSSSPVFT). The residue at position 754 (S754) is a Phosphoserine. 2 disordered regions span residues 762-814 (HPST…TPVS) and 840-865 (NAMG…KAPQ). The span at 779–790 (PAPPSPAEPAAP) shows a compositional bias: pro residues. Phosphoserine occurs at positions 809 and 814. 2 positions are modified to phosphoserine: S903 and S924. Ig-like domains lie at 941 to 1025 (PIFD…GRIS), 1068 to 1157 (PHFL…LELT), and 1167 to 1257 (PVIL…ARLD). An intrachain disulfide couples C1089 to C1141.

This sequence belongs to the myotilin/palladin family. As to quaternary structure, interacts with TTN/titin, NEB, NEBL, ACTN2 and CARP.

It localises to the cytoplasm. It is found in the nucleus. The protein localises to the myofibril. The protein resides in the sarcomere. Its subcellular location is the z line. In terms of biological role, component of the sarcomere that tethers together nebulin (skeletal muscle) and nebulette (cardiac muscle) to alpha-actinin, at the Z lines. This chain is Myopalladin (Mypn), found in Mus musculus (Mouse).